Here is a 547-residue protein sequence, read N- to C-terminus: Chaperonin GroEL (547 aa).

Residues 30 to 33, lysine 51, 87 to 91, glycine 415, 479 to 481, and aspartate 495 contribute to the ATP site; these read TLGP, DGTTT, and NAA.

This sequence belongs to the chaperonin (HSP60) family. Forms a cylinder of 14 subunits composed of two heptameric rings stacked back-to-back. Interacts with the co-chaperonin GroES.

It localises to the cytoplasm. The enzyme catalyses ATP + H2O + a folded polypeptide = ADP + phosphate + an unfolded polypeptide.. Its function is as follows. Together with its co-chaperonin GroES, plays an essential role in assisting protein folding. The GroEL-GroES system forms a nano-cage that allows encapsulation of the non-native substrate proteins and provides a physical environment optimized to promote and accelerate protein folding. This is Chaperonin GroEL from Pseudomonas savastanoi pv. phaseolicola (strain 1448A / Race 6) (Pseudomonas syringae pv. phaseolicola (strain 1448A / Race 6)).